Reading from the N-terminus, the 277-residue chain is Probable endonuclease 4 (277 aa).

Positions 70, 108, 145, 178, 181, 212, 225, 227, and 257 each coordinate Zn(2+).

This sequence belongs to the AP endonuclease 2 family. The cofactor is Zn(2+).

The enzyme catalyses Endonucleolytic cleavage to 5'-phosphooligonucleotide end-products.. Functionally, endonuclease IV plays a role in DNA repair. It cleaves phosphodiester bonds at apurinic or apyrimidinic (AP) sites, generating a 3'-hydroxyl group and a 5'-terminal sugar phosphate. This is Probable endonuclease 4 from Mycoplasmopsis pulmonis (strain UAB CTIP) (Mycoplasma pulmonis).